The sequence spans 863 residues: Glycogen phosphorylase (863 aa).

An N6-(pyridoxal phosphate)lysine modification is found at Lys618.

This sequence belongs to the glycogen phosphorylase family. Pyridoxal 5'-phosphate serves as cofactor.

The enzyme catalyses [(1-&gt;4)-alpha-D-glucosyl](n) + phosphate = [(1-&gt;4)-alpha-D-glucosyl](n-1) + alpha-D-glucose 1-phosphate. Its function is as follows. Phosphorylase is an important allosteric enzyme in carbohydrate metabolism. Enzymes from different sources differ in their regulatory mechanisms and in their natural substrates. However, all known phosphorylases share catalytic and structural properties. In Mycobacterium bovis (strain ATCC BAA-935 / AF2122/97), this protein is Glycogen phosphorylase (glgP).